Reading from the N-terminus, the 101-residue chain is Signal recognition particle 19 kDa protein (101 aa).

This sequence belongs to the SRP19 family. In terms of assembly, part of the signal recognition particle protein translocation system, which is composed of SRP and FtsY. Archaeal SRP consists of a 7S RNA molecule of 300 nucleotides and two protein subunits: SRP54 and SRP19.

Its subcellular location is the cytoplasm. In terms of biological role, involved in targeting and insertion of nascent membrane proteins into the cytoplasmic membrane. Binds directly to 7S RNA and mediates binding of the 54 kDa subunit of the SRP. The chain is Signal recognition particle 19 kDa protein from Thermofilum pendens (strain DSM 2475 / Hrk 5).